A 127-amino-acid polypeptide reads, in one-letter code: MNKTGIAHIYASQNNTIILVTDPTGAETIAKSSGGMVVKNDRDEASPYAAMRAADMVSEKLREREITDLIIRVRAPGGSKSKIPGPGAQSAIRALSRAGFKILRIEEVTPIPHDGTKKKGGRRGRRV.

Belongs to the universal ribosomal protein uS11 family. As to quaternary structure, part of the 30S ribosomal subunit.

Functionally, located on the platform of the 30S subunit. The polypeptide is Small ribosomal subunit protein uS11 (Picrophilus torridus (strain ATCC 700027 / DSM 9790 / JCM 10055 / NBRC 100828 / KAW 2/3)).